A 577-amino-acid polypeptide reads, in one-letter code: Arginine--tRNA ligase (577 aa).

Positions 122–132 match the 'HIGH' region motif; it reads PNVAKEMHVGH.

This sequence belongs to the class-I aminoacyl-tRNA synthetase family. As to quaternary structure, monomer.

It localises to the cytoplasm. The enzyme catalyses tRNA(Arg) + L-arginine + ATP = L-arginyl-tRNA(Arg) + AMP + diphosphate. The chain is Arginine--tRNA ligase from Aliivibrio fischeri (strain ATCC 700601 / ES114) (Vibrio fischeri).